The chain runs to 200 residues: Prolactin-2 (200 aa).

Positions 1-23 (MRQRRISGSNLMMVLCVVAMCRA) are cleaved as a signal peptide. 2 disulfides stabilise this stretch: Cys64–Cys173 and Cys190–Cys200.

The protein belongs to the somatotropin/prolactin family.

The protein resides in the secreted. The sequence is that of Prolactin-2 (prl2) from Oreochromis mossambicus (Mozambique tilapia).